Here is a 201-residue protein sequence, read N- to C-terminus: Recombination protein RecR (201 aa).

The segment at 57–72 (CADCRTFTEQEVCNIC) adopts a C4-type zinc-finger fold. Residues 81–176 (GQICVVESPA…EASRIAHGVP (96 aa)) form the Toprim domain.

This sequence belongs to the RecR family.

Its function is as follows. May play a role in DNA repair. It seems to be involved in an RecBC-independent recombinational process of DNA repair. It may act with RecF and RecO. In Escherichia coli O6:K15:H31 (strain 536 / UPEC), this protein is Recombination protein RecR.